We begin with the raw amino-acid sequence, 678 residues long: Pentatricopeptide repeat-containing protein At5g39980, chloroplastic (678 aa).

Residues M1–E64 constitute a chloroplast transit peptide. PPR repeat units follow at residues S154–P188, D189–G223, D224–P258, D259–P293, N294–L328, D329–P363, N364–Q398, N399–P433, N434–I468, D469–P503, D535–P569, D570–F604, P605–V638, and N639–K674.

This sequence belongs to the PPR family. P subfamily.

It is found in the plastid. It localises to the chloroplast. This chain is Pentatricopeptide repeat-containing protein At5g39980, chloroplastic, found in Arabidopsis thaliana (Mouse-ear cress).